Here is a 239-residue protein sequence, read N- to C-terminus: Ribosomal RNA small subunit methyltransferase G (239 aa).

Residues Gly77, Phe82, 128–129, and Arg146 each bind S-adenosyl-L-methionine; that span reads AE. Residues 214–239 form a disordered region; the sequence is IDKKRQTPKKYPRKPGTPNKTPLLEK.

The protein belongs to the methyltransferase superfamily. RNA methyltransferase RsmG family.

The protein resides in the cytoplasm. Functionally, specifically methylates the N7 position of guanine in position 535 of 16S rRNA. In Staphylococcus aureus (strain Mu3 / ATCC 700698), this protein is Ribosomal RNA small subunit methyltransferase G.